A 316-amino-acid chain; its full sequence is Methionyl-tRNA formyltransferase (316 aa).

(6S)-5,6,7,8-tetrahydrofolate is bound at residue S110–P113.

Belongs to the Fmt family.

It carries out the reaction L-methionyl-tRNA(fMet) + (6R)-10-formyltetrahydrofolate = N-formyl-L-methionyl-tRNA(fMet) + (6S)-5,6,7,8-tetrahydrofolate + H(+). Attaches a formyl group to the free amino group of methionyl-tRNA(fMet). The formyl group appears to play a dual role in the initiator identity of N-formylmethionyl-tRNA by promoting its recognition by IF2 and preventing the misappropriation of this tRNA by the elongation apparatus. The sequence is that of Methionyl-tRNA formyltransferase from Bacillus licheniformis (strain ATCC 14580 / DSM 13 / JCM 2505 / CCUG 7422 / NBRC 12200 / NCIMB 9375 / NCTC 10341 / NRRL NRS-1264 / Gibson 46).